The primary structure comprises 555 residues: E3 ubiquitin-protein ligase ARIH1 (555 aa).

Over residues 1 to 47 the composition is skewed to acidic residues; that stretch reads MDSDEGYNYEFDEDEECSEEDSGAEEEEDDDEDEPDDDNLDLGEVEL. Residues 1 to 93 are disordered; it reads MDSDEGYNYE…GGGGGPGHEQ (93 aa). Over residues 65-90 the composition is skewed to gly residues; it reads ETGGGGGSALGPGGGGGGGGGGGGPG. The UBA-like stretch occupies residues 103–151; sequence TAEQILQHMVECIREVNEVIQNPATITRILLSHFNWDKEKLMERYFDGN. An N6-acetyllysine modification is found at Lys140. The tract at residues 180 to 391 is TRIAD supradomain; the sequence is QDMPCQICYL…SAWYNCNRYN (212 aa). Positions 184, 187, 201, 203, 206, 209, 229, 234, 274, 279, 295, 297, 302, 305, 310, 315, 342, and 345 each coordinate Zn(2+). The RING-type 1 zinc-finger motif lies at 184-234; sequence CQICYLNYPNSYFTGLECGHKFCMQCWSEYLTTKIMEEGMGQTISCPAHGC. Residues 254–315 form an IBR-type zinc finger; sequence LKYQHLITNS…GENWHDPVKC (62 aa). An RING-type 2; atypical zinc finger spans residues 342 to 373; it reads CPKCHVTIEKDGGCNHMVCRNQNCKAEFCWVC. Cys355 is an active-site residue. Zn(2+) contacts are provided by Cys360, Cys365, Cys370, Cys373, His380, and Cys387. Positions 406–555 are ariadne domain; the sequence is RAALQRYLFY…EKDLWEYIED (150 aa).

It belongs to the RBR family. Ariadne subfamily. Interacts (via the first RING-type zinc finger) with UBE2L3. Associates with cullin-RING ubiquitin ligase (CRL) complexes containing CUL1, CUL2 and CUL3. Interacts with neddylated CUL1. Interacts with neddylated CUL2. Interacts with neddylated CUL3. Interacts with neddylated CUL4A. Widely expressed.

The protein resides in the cytoplasm. The protein localises to the nucleus. It localises to the cajal body. It catalyses the reaction [E2 ubiquitin-conjugating enzyme]-S-ubiquitinyl-L-cysteine + [acceptor protein]-L-lysine = [E2 ubiquitin-conjugating enzyme]-L-cysteine + [acceptor protein]-N(6)-ubiquitinyl-L-lysine.. It participates in protein modification; protein ubiquitination. Its activity is regulated as follows. Autoinhibited by the ariadne domain, which masks the second RING-type zinc finger that contains the active site and inhibits the E3 activity. Inhibition is relieved upon binding to neddylated cullin-RING ubiquitin ligase complexes, which activate the E3 ligase activity of ARIH1. In terms of biological role, E3 ubiquitin-protein ligase, which catalyzes ubiquitination of target proteins together with ubiquitin-conjugating enzyme E2 UBE2L3. Acts as an atypical E3 ubiquitin-protein ligase by working together with cullin-RING ubiquitin ligase (CRL) complexes and initiating ubiquitination of CRL substrates: associates with CRL complexes and specifically mediates addition of the first ubiquitin on CRLs targets. The initial ubiquitin is then elongated by CDC34/UBE2R1 and UBE2R2. E3 ubiquitin-protein ligase activity is activated upon binding to neddylated cullin-RING ubiquitin ligase complexes. Plays a role in protein translation in response to DNA damage by mediating ubiquitination of EIF4E2, the consequences of EIF4E2 ubiquitination are however unclear. According to a report, EIF4E2 ubiquitination leads to promote EIF4E2 cap-binding and protein translation arrest. According to another report EIF4E2 ubiquitination leads to its subsequent degradation. Acts as the ligase involved in ISGylation of EIF4E2. In vitro, controls the degradation of the LINC (LInker of Nucleoskeleton and Cytoskeleton) complex member SUN2 and may therefore have a role in the formation and localization of the LINC complex, and as a consequence, may act in nuclear subcellular localization and nuclear morphology. The sequence is that of E3 ubiquitin-protein ligase ARIH1 (Arih1) from Mus musculus (Mouse).